Consider the following 394-residue polypeptide: Envelope glycoprotein D (394 aa).

A signal peptide spans 1–25 (MGGAAARLGAVILFVVIVGLHGVRG). Residues 25–57 (GKYALADASLKMADPNRFRGKDLPVPDRLTDPP) are interaction with TNFRSF14. Over 26-339 (KYALADASLK…PYHPPATPNN (314 aa)) the chain is Virion surface. His-64 contributes to the Zn(2+) binding site. 3 cysteine pairs are disulfide-bonded: Cys-91/Cys-214, Cys-131/Cys-227, and Cys-143/Cys-152. N-linked (GlcNAc...) asparagine; by host glycosylation is found at Asn-119 and Asn-146. Asp-240 contributes to the Zn(2+) binding site. The interval 261-305 (LKIAGWHGPKAPYTSTLLPPELSETPNATQPELAPEDPEDSALLE) is profusion. The disordered stretch occupies residues 275 to 301 (STLLPPELSETPNATQPELAPEDPEDS). Asn-287 carries an N-linked (GlcNAc...) asparagine; by host glycan. Residues 340-364 (MGLIAGAVGGSLLAALVICGIVYWM) traverse the membrane as a helical segment. Residues 365–394 (RRRTQKGPKRIRLPHIREDDQPSSHQPLFY) lie on the Intravirion side of the membrane. Residues 374–394 (RIRLPHIREDDQPSSHQPLFY) are disordered.

It belongs to the herpesviridae glycoprotein D family. In terms of assembly, homodimer. Interacts with host receptor TNFRSF14. Interacts with host receptor NECTIN1. Interacts (via profusion domain) with gB; this interaction occurs in the absence of gH/gL. Interacts (via profusion domain) with gH/gL heterodimer; this interaction occurs in the absence of gB. Associates with the gB-gH/gL-gD complex. Interacts (via C-terminus) with UL11 tegument protein. Interacts with host RSAD2.

The protein localises to the virion membrane. It localises to the host Golgi apparatus. In terms of biological role, envelope glycoprotein that binds to the host cell entry receptors NECTIN1, TNFRSF14/HVEM and 3-O-sulfated heparan sulfate, promoting the virus entry into host cells. May trigger fusion with host membrane, by recruiting the fusion machinery composed of gB and gH/gL. The protein is Envelope glycoprotein D (gD) of Homo sapiens (Human).